Here is a 382-residue protein sequence, read N- to C-terminus: Alcohol dehydrogenase 4 (382 aa).

D40, N72, G99, S100, T139, T140, T148, F150, K161, and G183 together coordinate NAD(+). Residues D195, H199, and H264 each contribute to the Fe(2+) site. Residues H268 and H278 each coordinate NAD(+). H278 serves as a coordination point for Fe(2+).

Belongs to the iron-containing alcohol dehydrogenase family. As to quaternary structure, homodimer. Requires Zn(2+) as cofactor. It depends on Fe(2+) as a cofactor.

The protein localises to the mitochondrion. It carries out the reaction a primary alcohol + NAD(+) = an aldehyde + NADH + H(+). The catalysed reaction is ethanol + NAD(+) = acetaldehyde + NADH + H(+). Its activity is regulated as follows. Inhibited by EDTA. Its function is as follows. Alcohol dehydrogenase specific for ethanol. Acts mainyl as a mitochondrial formaldehyde dehydrogenase and has no effect on ethanol production. Shows drastically reduced activity towards primary alcohols from 4 carbon atoms upward. Isomers of aliphatic alcohol, as well as secondary alcohols and glycerol are not used at all. The role of ADH4 in yeast metabolism is not yet known, but ADH4 is not responsible for the production of ethanol during growth on glucose nor responsible for the oxidation of ethanol to acetaldehyde. The polypeptide is Alcohol dehydrogenase 4 (Saccharomyces cerevisiae (strain ATCC 204508 / S288c) (Baker's yeast)).